Consider the following 590-residue polypeptide: CTP synthase (590 aa).

An amidoligase domain region spans residues 1 to 281; it reads MPALRKHPQT…DAYVVRRLNL (281 aa). S23 contacts CTP. Residue S23 participates in UTP binding. ATP is bound by residues 24–29 and D81; that span reads SLGKGL. D81 and E155 together coordinate Mg(2+). Residues 162 to 164, 202 to 207, and K238 contribute to the CTP site; these read DIE and KTKPTQ. UTP contacts are provided by residues 202–207 and K238; that span reads KTKPTQ. In terms of domain architecture, Glutamine amidotransferase type-1 spans 306 to 554; the sequence is RIALVGKYID…IGAAIDYKAA (249 aa). G369 serves as a coordination point for L-glutamine. The Nucleophile; for glutamine hydrolysis role is filled by C396. L-glutamine contacts are provided by residues 397–400, E419, and R480; that span reads LGLQ. Active-site residues include H527 and E529.

It belongs to the CTP synthase family. In terms of assembly, homotetramer.

It catalyses the reaction UTP + L-glutamine + ATP + H2O = CTP + L-glutamate + ADP + phosphate + 2 H(+). It carries out the reaction L-glutamine + H2O = L-glutamate + NH4(+). The catalysed reaction is UTP + NH4(+) + ATP = CTP + ADP + phosphate + 2 H(+). It functions in the pathway pyrimidine metabolism; CTP biosynthesis via de novo pathway; CTP from UDP: step 2/2. Its activity is regulated as follows. Allosterically activated by GTP, when glutamine is the substrate; GTP has no effect on the reaction when ammonia is the substrate. The allosteric effector GTP functions by stabilizing the protein conformation that binds the tetrahedral intermediate(s) formed during glutamine hydrolysis. Inhibited by the product CTP, via allosteric rather than competitive inhibition. Catalyzes the ATP-dependent amination of UTP to CTP with either L-glutamine or ammonia as the source of nitrogen. Regulates intracellular CTP levels through interactions with the four ribonucleotide triphosphates. This is CTP synthase from Mycolicibacterium smegmatis (strain ATCC 700084 / mc(2)155) (Mycobacterium smegmatis).